Here is a 166-residue protein sequence, read N- to C-terminus: Lipoprotein signal peptidase (166 aa).

Helical transmembrane passes span 12–32, 70–90, and 102–122; these read WLWL…LILQ, WFFA…MYRS, and ALII…GFVV. Active-site residues include Asp123 and Asp141. Residues 137 to 157 traverse the membrane as a helical segment; it reads FNLADTAICIGAALIVLEGFL.

The protein belongs to the peptidase A8 family.

It is found in the cell inner membrane. It catalyses the reaction Release of signal peptides from bacterial membrane prolipoproteins. Hydrolyzes -Xaa-Yaa-Zaa-|-(S,diacylglyceryl)Cys-, in which Xaa is hydrophobic (preferably Leu), and Yaa (Ala or Ser) and Zaa (Gly or Ala) have small, neutral side chains.. Its pathway is protein modification; lipoprotein biosynthesis (signal peptide cleavage). This protein specifically catalyzes the removal of signal peptides from prolipoproteins. The protein is Lipoprotein signal peptidase of Salmonella typhi.